We begin with the raw amino-acid sequence, 543 residues long: Cytochrome P450 2U1 (543 aa).

4 helical membrane passes run 32 to 52 (PTGG…SWLW), 58 to 78 (GIPP…VLLP), 261 to 281 (VCLN…YLPF), and 342 to 362 (LFYI…NSLL). Cysteine 490 contributes to the heme binding site. Residues 495–515 (LAKMELFLMFVSLMQSFTFVL) traverse the membrane as a helical segment.

This sequence belongs to the cytochrome P450 family. The cofactor is heme.

The protein localises to the endoplasmic reticulum membrane. Its subcellular location is the microsome membrane. It is found in the mitochondrion inner membrane. It carries out the reaction an omega-methyl-long-chain fatty acid + reduced [NADPH--hemoprotein reductase] + O2 = an omega-hydroxy-long-chain fatty acid + oxidized [NADPH--hemoprotein reductase] + H2O + H(+). The enzyme catalyses (5Z,8Z,11Z,14Z)-eicosatetraenoate + reduced [NADPH--hemoprotein reductase] + O2 = 19-hydroxy-(5Z,8Z,11Z,14Z)-eicosatetraenoate + oxidized [NADPH--hemoprotein reductase] + H2O + H(+). The catalysed reaction is (5Z,8Z,11Z,14Z)-eicosatetraenoate + reduced [NADPH--hemoprotein reductase] + O2 = 20-hydroxy-(5Z,8Z,11Z,14Z)-eicosatetraenoate + oxidized [NADPH--hemoprotein reductase] + H2O + H(+). It catalyses the reaction N-[(5Z,8Z,11Z,14Z)-eicosatetraenoyl]-serotonin + reduced [NADPH--hemoprotein reductase] + O2 = 2-oxo-N-[(5Z,8Z,11Z,14Z)-eicosatetraenoyl]-serotonin + oxidized [NADPH--hemoprotein reductase] + H2O + H(+). Functionally, a cytochrome P450 monooxygenase involved in the metabolism of arachidonic acid and its conjugates. Mechanistically, uses molecular oxygen inserting one oxygen atom into a substrate, and reducing the second into a water molecule, with two electrons provided by NADPH via cytochrome P450 reductase (CPR; NADPH-ferrihemoprotein reductase). Acts as an omega and omega-1 hydroxylase for arachidonic acid and possibly for other long chain fatty acids. May modulate the arachidonic acid signaling pathway and play a role in other fatty acid signaling processes. May down-regulate the biological activities of N-arachidonoyl-serotonin, an endocannabinoid that has anti-nociceptive effects through inhibition of fatty acid amide hydrolase FAAH, TRPV1 receptor and T-type calcium channels. Catalyzes C-2 oxidation of the indole ring of N-arachidonoyl-serotonin forming a less active product 2-oxo-N-arachidonoyl-serotonin. The protein is Cytochrome P450 2U1 (CYP2U1) of Bos taurus (Bovine).